Reading from the N-terminus, the 311-residue chain is L-lactate dehydrogenase 2 (311 aa).

Residues Val-14, Asp-35, and Arg-40 each contribute to the NAD(+) site. Arg-90 serves as a coordination point for substrate. Residues Ser-103, Ala-120–Asn-122, and Thr-145 each bind NAD(+). Residue Asn-122–Asp-125 participates in substrate binding. Asp-150–Arg-153 is a substrate binding site. Residue His-177 is the Proton acceptor of the active site. Residue Thr-230 participates in substrate binding.

Belongs to the LDH/MDH superfamily. LDH family. As to quaternary structure, homotetramer.

The protein resides in the cytoplasm. It carries out the reaction (S)-lactate + NAD(+) = pyruvate + NADH + H(+). It functions in the pathway fermentation; pyruvate fermentation to lactate; (S)-lactate from pyruvate: step 1/1. Functionally, catalyzes the conversion of lactate to pyruvate. In Listeria monocytogenes serotype 4b (strain F2365), this protein is L-lactate dehydrogenase 2.